The following is a 234-amino-acid chain: MEQQQGAEDVPVIYLHEIKRQYLQGEVPLTILDGAKLALWAGQSVALVAPSGSGKSTLLHIAGLLEAPDSGEVYVNGAPTSQLPDIERTQLRRTDIGFVYQSHRLLPEFSALENVMLPQMIRGLKKSESVKRAKEILGYLGLGDRITHRPAELSGGEQQRVAIARAVANAPRVLFADEPTGNLDPHTADHVFQALMQLVKATRVSMLIATHNMELAGRMDRRVSLSDGQVVELE.

The region spanning 13–233 (IYLHEIKRQY…SLSDGQVVEL (221 aa)) is the ABC transporter domain. 49–56 (APSGSGKS) serves as a coordination point for ATP.

Belongs to the ABC transporter superfamily. Lipoprotein translocase (TC 3.A.1.125) family. In terms of assembly, the complex is composed of two ATP-binding proteins (LolD) and two transmembrane proteins (LolC and LolE).

Its subcellular location is the cell inner membrane. Functionally, part of the ABC transporter complex LolCDE involved in the translocation of mature outer membrane-directed lipoproteins, from the inner membrane to the periplasmic chaperone, LolA. Responsible for the formation of the LolA-lipoprotein complex in an ATP-dependent manner. The chain is Lipoprotein-releasing system ATP-binding protein LolD from Bradyrhizobium diazoefficiens (strain JCM 10833 / BCRC 13528 / IAM 13628 / NBRC 14792 / USDA 110).